A 247-amino-acid chain; its full sequence is 14-3-3 protein zeta (247 aa).

The protein belongs to the 14-3-3 family. Homodimer.

The protein localises to the cytoplasm. Adapter protein implicated in the regulation of a large spectrum of both general and specialized signaling pathways. Binds to a large number of partners, usually by recognition of a phosphoserine or phosphothreonine motif. Binding generally results in the modulation of the activity of the binding partner. The protein is 14-3-3 protein zeta (14-3-3zeta) of Bombyx mori (Silk moth).